The chain runs to 739 residues: Long-chain-fatty-acid--CoA ligase ACSBG2 (739 aa).

Residues 287 to 295 (TSGTTGQPK), 478 to 483 (ELYGMS), Asp-556, Arg-571, and Lys-684 contribute to the ATP site.

Belongs to the ATP-dependent AMP-binding enzyme family. Bubblegum subfamily.

Its subcellular location is the cytoplasm. The catalysed reaction is a long-chain fatty acid + ATP + CoA = a long-chain fatty acyl-CoA + AMP + diphosphate. It carries out the reaction (5Z,8Z,11Z,14Z)-eicosatetraenoate + ATP + CoA = (5Z,8Z,11Z,14Z)-eicosatetraenoyl-CoA + AMP + diphosphate. The enzyme catalyses hexadecanoate + ATP + CoA = hexadecanoyl-CoA + AMP + diphosphate. It catalyses the reaction (9Z)-octadecenoate + ATP + CoA = (9Z)-octadecenoyl-CoA + AMP + diphosphate. The catalysed reaction is (9Z,12Z)-octadecadienoate + ATP + CoA = (9Z,12Z)-octadecadienoyl-CoA + AMP + diphosphate. It carries out the reaction tetracosanoate + ATP + CoA = tetracosanoyl-CoA + AMP + diphosphate. In terms of biological role, catalyzes the conversion of fatty acids such as long chain and very long-chain fatty acids to their active form acyl-CoAs for both synthesis of cellular lipids, and degradation via beta-oxidation. Can activate diverse saturated, monosaturated and polyunsaturated fatty acids. The protein is Long-chain-fatty-acid--CoA ligase ACSBG2 of Xenopus laevis (African clawed frog).